A 382-amino-acid chain; its full sequence is Dual-specificity RNA methyltransferase RlmN (382 aa).

Catalysis depends on glutamate 113, which acts as the Proton acceptor. The region spanning 119–358 is the Radical SAM core domain; the sequence is EINRATLCIS…TTIRKQRGID (240 aa). A disulfide bridge connects residues cysteine 126 and cysteine 363. Positions 133, 137, and 140 each coordinate [4Fe-4S] cluster. Residues 187-188, serine 219, 241-243, and asparagine 320 contribute to the S-adenosyl-L-methionine site; these read GE and SLH. The active-site S-methylcysteine intermediate is the cysteine 363.

It belongs to the radical SAM superfamily. RlmN family. [4Fe-4S] cluster is required as a cofactor.

The protein resides in the cytoplasm. The catalysed reaction is adenosine(2503) in 23S rRNA + 2 reduced [2Fe-2S]-[ferredoxin] + 2 S-adenosyl-L-methionine = 2-methyladenosine(2503) in 23S rRNA + 5'-deoxyadenosine + L-methionine + 2 oxidized [2Fe-2S]-[ferredoxin] + S-adenosyl-L-homocysteine. The enzyme catalyses adenosine(37) in tRNA + 2 reduced [2Fe-2S]-[ferredoxin] + 2 S-adenosyl-L-methionine = 2-methyladenosine(37) in tRNA + 5'-deoxyadenosine + L-methionine + 2 oxidized [2Fe-2S]-[ferredoxin] + S-adenosyl-L-homocysteine. Functionally, specifically methylates position 2 of adenine 2503 in 23S rRNA and position 2 of adenine 37 in tRNAs. m2A2503 modification seems to play a crucial role in the proofreading step occurring at the peptidyl transferase center and thus would serve to optimize ribosomal fidelity. The sequence is that of Dual-specificity RNA methyltransferase RlmN from Wigglesworthia glossinidia brevipalpis.